Here is a 358-residue protein sequence, read N- to C-terminus: scyllo-inositol 2-dehydrogenase (NADP(+)) IolW (358 aa).

This sequence belongs to the Gfo/Idh/MocA family.

The enzyme catalyses scyllo-inositol + NADP(+) = scyllo-inosose + NADPH + H(+). Its function is as follows. Catalyzes the reversible NADPH-dependent reduction of scyllo-inosose (SIS) to scyllo-inositol (SI). Cannot use NADH instead of NADPH. May be involved in reduction of not only SIS but also various oxidized compounds manifested upon stressful conditions. This chain is scyllo-inositol 2-dehydrogenase (NADP(+)) IolW, found in Bacillus subtilis (strain 168).